Consider the following 159-residue polypeptide: Large ribosomal subunit protein uL10 (159 aa).

This sequence belongs to the universal ribosomal protein uL10 family. Part of the ribosomal stalk of the 50S ribosomal subunit. The N-terminus interacts with L11 and the large rRNA to form the base of the stalk. The C-terminus forms an elongated spine to which L12 dimers bind in a sequential fashion forming a multimeric L10(L12)X complex.

Forms part of the ribosomal stalk, playing a central role in the interaction of the ribosome with GTP-bound translation factors. This chain is Large ribosomal subunit protein uL10, found in Nautilia profundicola (strain ATCC BAA-1463 / DSM 18972 / AmH).